The following is a 110-amino-acid chain: MTDTLSRLAEVLESRKDAAADSSYVASLYHKGLNKILEKLGEESIETIIAAKDAAVSGDCSDVIYETADLWFHSMVMLAALGQHPQAVLDELDRRFGLSGHAEKAARTAE.

This sequence belongs to the PRA-PH family.

The protein resides in the cytoplasm. The enzyme catalyses 1-(5-phospho-beta-D-ribosyl)-ATP + H2O = 1-(5-phospho-beta-D-ribosyl)-5'-AMP + diphosphate + H(+). It functions in the pathway amino-acid biosynthesis; L-histidine biosynthesis; L-histidine from 5-phospho-alpha-D-ribose 1-diphosphate: step 2/9. The polypeptide is Phosphoribosyl-ATP pyrophosphatase (Pseudomonas savastanoi pv. phaseolicola (strain 1448A / Race 6) (Pseudomonas syringae pv. phaseolicola (strain 1448A / Race 6))).